We begin with the raw amino-acid sequence, 407 residues long: Obg-like ATPase homolog (407 aa).

Positions Leu46–Cys301 constitute an OBG-type G domain. ATP-binding positions include Asn55–Thr60 and Met249. The 84-residue stretch at Asn322–Ile405 folds into the TGS domain.

The protein belongs to the TRAFAC class OBG-HflX-like GTPase superfamily. OBG GTPase family.

In terms of biological role, hydrolyzes ATP, and can also hydrolyze GTP with lower efficiency. Has lower affinity for GTP. This is Obg-like ATPase homolog from Schizosaccharomyces pombe (strain 972 / ATCC 24843) (Fission yeast).